The sequence spans 413 residues: MPSVRSIEDYFGQIESLLYRQDWTNGEKISKFVSTYDEHAQEPFMHIEAYGSRSKRCRVSEDEVFDEIVCLHLHVLYNIHVAQDLITAQSTQIQIIQLFNKEILQKRKDENWFLPIFYRLCTDLRWLSKGAEACVSGDDEGDSNANSFFESAAKAITECYRTCVSDVHAEEGTTKKVAMLNMTNQLFQIYFQINKLNLLKPLIRAIDNCGSLYHDFLMSDKVAYNYFLGRKAMFDADLNLAEKSLLYAFRNCPADSMSNKRKILIYLIPVKMFLGHMPTSQLLHEYRLDEFQDVVAGVKDGNLAQLDGALAANEAFFIKCGIFLMLEKLRMITFRTLFKKVSQIVGTAQIPLDAFQTALRFVGVTDVDMDELECIIANLIASKKIKGYLSHQHQKLVISKMNAFPTLSGVSSN.

A PCI domain is found at 222–403 (VAYNYFLGRK…QKLVISKMNA (182 aa)).

It belongs to the CSN12 family.

The protein is PCI domain-containing protein 2 homolog of Caenorhabditis elegans.